An 865-amino-acid chain; its full sequence is DNA-directed RNA polymerase subunit Rpo1N (865 aa).

Residues Cys60, Cys63, Cys70, His73, Cys100, Cys103, Cys146, and Cys149 each contribute to the Zn(2+) site. Asp451, Asp453, and Asp455 together coordinate Mg(2+). Residues 500-531 (EHTSSQGKRLFSVRSRPPDPQEGRAPPPDREG) form a disordered region. Positions 515–531 (RPPDPQEGRAPPPDREG) are enriched in basic and acidic residues.

It belongs to the RNA polymerase beta' chain family. In terms of assembly, part of the RNA polymerase complex. It depends on Mg(2+) as a cofactor. Zn(2+) is required as a cofactor.

The protein resides in the cytoplasm. The enzyme catalyses RNA(n) + a ribonucleoside 5'-triphosphate = RNA(n+1) + diphosphate. Functionally, DNA-dependent RNA polymerase (RNAP) catalyzes the transcription of DNA into RNA using the four ribonucleoside triphosphates as substrates. Forms the clamp head domain. The polypeptide is DNA-directed RNA polymerase subunit Rpo1N (Methanothermobacter thermautotrophicus (strain Winter) (Methanobacterium thermoautotrophicum)).